A 507-amino-acid chain; its full sequence is Cytochrome P450 3A28 (507 aa).

Residue Cys-442 participates in heme binding.

It belongs to the cytochrome P450 family. It depends on heme as a cofactor.

The protein localises to the endoplasmic reticulum membrane. It is found in the microsome membrane. It carries out the reaction an organic molecule + reduced [NADPH--hemoprotein reductase] + O2 = an alcohol + oxidized [NADPH--hemoprotein reductase] + H2O + H(+). In terms of biological role, cytochromes P450 are a group of heme-thiolate monooxygenases. In liver microsomes, this enzyme is involved in an NADPH-dependent electron transport pathway. It oxidizes a variety of structurally unrelated compounds, including steroids, fatty acids, and xenobiotics. The polypeptide is Cytochrome P450 3A28 (CYP3A28) (Bos taurus (Bovine)).